Reading from the N-terminus, the 392-residue chain is N-acetylneuraminate epimerase (392 aa).

A signal peptide spans 1–35; the sequence is MTQLYPQYKKQLTTKIVLFSALSLLMMASLPNTYA. 7 Kelch repeats span residues 56 to 100, 102 to 155, 157 to 192, 193 to 238, 241 to 290, 312 to 361, and 363 to 392; these read SLYV…VVLA, KLYV…TTLD, SQAV…AVIN, AYFN…SRMD, LILI…LAGA, KQFN…QGPD, and VILI…LHIE. The Proton acceptor role is filled by Glu247.

The protein belongs to the NanM family. In terms of assembly, homodimer.

It is found in the periplasm. It carries out the reaction N-acetyl-alpha-neuraminate = N-acetyl-beta-neuraminate. Converts alpha-N-acetylneuranimic acid (Neu5Ac) to the beta-anomer, accelerating the equilibrium between the alpha- and beta-anomers. Probably facilitates sialidase-negative bacteria to compete successfully for limited amounts of extracellular Neu5Ac, which is likely taken up in the beta-anomer. In addition, the rapid removal of sialic acid from solution might be advantageous to the bacterium to damp down host responses. The protein is N-acetylneuraminate epimerase of Yersinia pseudotuberculosis serotype O:1b (strain IP 31758).